We begin with the raw amino-acid sequence, 312 residues long: Olfactory receptor 51B5 (312 aa).

Residues Met-1–His-23 are Extracellular-facing. The helical transmembrane segment at Trp-24–Leu-44 threads the bilayer. Topologically, residues Leu-45 to Asn-52 are cytoplasmic. The chain crosses the membrane as a helical span at residues Leu-53–Leu-73. At Thr-74–Ser-97 the chain is on the extracellular side. Cys-95 and Cys-187 are disulfide-bonded. A helical transmembrane segment spans residues Gln-98–Tyr-118. Over Asp-119–Thr-137 the chain is Cytoplasmic. Residues Arg-138 to Ile-158 traverse the membrane as a helical segment. Residues Arg-159–Arg-194 are Extracellular-facing. A helical membrane pass occupies residues Leu-195–Ser-215. The Cytoplasmic portion of the chain corresponds to Tyr-216 to Ala-235. A helical transmembrane segment spans residues Leu-236 to Leu-256. The Extracellular segment spans residues Ser-257 to His-271. Residues Leu-272–Val-292 form a helical membrane-spanning segment. Over Lys-293–Thr-312 the chain is Cytoplasmic.

The protein belongs to the G-protein coupled receptor 1 family.

The protein resides in the cell membrane. Odorant receptor. The protein is Olfactory receptor 51B5 (OR51B5) of Homo sapiens (Human).